Consider the following 237-residue polypeptide: Flagellar L-ring protein (237 aa).

Positions 1 to 24 (MNRPGFPRFSVLIASLCGITLLSG) are cleaved as a signal peptide. C25 carries the N-palmitoyl cysteine lipid modification. The S-diacylglycerol cysteine moiety is linked to residue C25.

This sequence belongs to the FlgH family. As to quaternary structure, the basal body constitutes a major portion of the flagellar organelle and consists of four rings (L,P,S, and M) mounted on a central rod.

The protein localises to the cell outer membrane. It localises to the bacterial flagellum basal body. Its function is as follows. Assembles around the rod to form the L-ring and probably protects the motor/basal body from shearing forces during rotation. The chain is Flagellar L-ring protein from Pseudomonas syringae pv. tomato (strain ATCC BAA-871 / DC3000).